Reading from the N-terminus, the 799-residue chain is Protein ADP-ribosyltransferase PARP3 (799 aa).

Basic and acidic residues predominate over residues 1–49 (MKVESRSHNVHHAHGEEEKVMTRKQKAESKAHEVEHSPKKAKVEDEKNG). The segment at 1-55 (MKVESRSHNVHHAHGEEEKVMTRKQKAESKAHEVEHSPKKAKVEDEKNGHTNGKS) is disordered. One can recognise a PADR1 zinc-binding domain in the interval 39–188 (KKAKVEDEKN…QRDLGLAIKP (150 aa)). Residues 71–105 (NEQLSLEQMKEILEANDLDSSGSDLEITRRCQDLL) form the SAP domain. The segment at 108 to 152 (GALEKCMVCNGNMEFDGRRYGCRGFYSEWSSCTFSTREPPRKDEP) is zinc ribbon. Residues cysteine 113, cysteine 116, cysteine 129, and cysteine 139 each contribute to the Zn(2+) site. The interval 140–161 (TFSTREPPRKDEPIKLPDSVQN) is disordered. A compositionally biased stretch (basic and acidic residues) spans 145–154 (EPPRKDEPIK). The BRCT domain maps to 189–261 (FTGMMISLMG…EPQPLESYDL (73 aa)). Residues 309-409 (DGKIFEKDGI…KKFQKKPLKF (101 aa)) form the WGR domain. The PARP alpha-helical domain occupies 436-555 (HCKLEPMVAN…DITLASHLIG (120 aa)). The PARP catalytic domain maps to 564 to 795 (DPLSDTYKKL…VKYEEKDAVI (232 aa)).

Belongs to the ARTD/PARP family.

The protein localises to the nucleus. It carries out the reaction L-aspartyl-[protein] + NAD(+) = 4-O-(ADP-D-ribosyl)-L-aspartyl-[protein] + nicotinamide. The catalysed reaction is L-glutamyl-[protein] + NAD(+) = 5-O-(ADP-D-ribosyl)-L-glutamyl-[protein] + nicotinamide. Its function is as follows. Involved in the base excision repair (BER) pathway, by catalyzing the poly(ADP-ribosyl)ation of a limited number of acceptor proteins involved in chromatin architecture and in DNA metabolism. This modification follows DNA damages and appears as an obligatory step in a detection/signaling pathway leading to the reparation of DNA strand breaks. This Medicago truncatula (Barrel medic) protein is Protein ADP-ribosyltransferase PARP3 (PARP3).